A 38-amino-acid chain; its full sequence is MKVYSSIKKRCEHCRIIRRKGKRFVICRVNPSHKQRQG.

Belongs to the bacterial ribosomal protein bL36 family.

This chain is Large ribosomal subunit protein bL36, found in Chlorobium phaeobacteroides (strain BS1).